The following is a 662-amino-acid chain: Acetyl-coenzyme A synthetase (662 aa).

CoA-binding positions include 197–200 (RKGK) and threonine 317. ATP is bound by residues 393–395 (GEP), 417–422 (DTWWQT), aspartate 510, and arginine 525. CoA is bound at residue serine 533. Arginine 536 lines the ATP pocket. Histidine 549 and valine 552 together coordinate Mg(2+). Position 623 is an N6-acetyllysine (lysine 623).

It belongs to the ATP-dependent AMP-binding enzyme family. Requires Mg(2+) as cofactor. In terms of processing, acetylated. Deacetylation by the SIR2-homolog deacetylase activates the enzyme.

It catalyses the reaction acetate + ATP + CoA = acetyl-CoA + AMP + diphosphate. Catalyzes the conversion of acetate into acetyl-CoA (AcCoA), an essential intermediate at the junction of anabolic and catabolic pathways. AcsA undergoes a two-step reaction. In the first half reaction, AcsA combines acetate with ATP to form acetyl-adenylate (AcAMP) intermediate. In the second half reaction, it can then transfer the acetyl group from AcAMP to the sulfhydryl group of CoA, forming the product AcCoA. The polypeptide is Acetyl-coenzyme A synthetase (Helicobacter pylori (strain HPAG1)).